The following is a 407-amino-acid chain: Argininosuccinate synthase (407 aa).

Residues 16–24 (AYSGGLDTS) and Ala-44 each bind ATP. L-citrulline is bound by residues Tyr-96 and Ser-101. ATP is bound at residue Gly-126. L-aspartate contacts are provided by Thr-128, Asn-132, and Asp-133. An L-citrulline-binding site is contributed by Asn-132. Residues Arg-136, Ser-185, Ser-194, Glu-270, and Tyr-282 each contribute to the L-citrulline site.

Belongs to the argininosuccinate synthase family. Type 1 subfamily. Homotetramer.

The protein resides in the cytoplasm. The enzyme catalyses L-citrulline + L-aspartate + ATP = 2-(N(omega)-L-arginino)succinate + AMP + diphosphate + H(+). Its pathway is amino-acid biosynthesis; L-arginine biosynthesis; L-arginine from L-ornithine and carbamoyl phosphate: step 2/3. The sequence is that of Argininosuccinate synthase from Shewanella amazonensis (strain ATCC BAA-1098 / SB2B).